Consider the following 277-residue polypeptide: Pantothenate synthetase (277 aa).

26–33 (MGNLHAGH) lines the ATP pocket. Catalysis depends on His-33, which acts as the Proton donor. Gln-57 provides a ligand contact to (R)-pantoate. Gln-57 serves as a coordination point for beta-alanine. 143–146 (GEKD) serves as a coordination point for ATP. Gln-149 provides a ligand contact to (R)-pantoate. ATP-binding positions include Val-172 and 180–183 (LSSR).

Belongs to the pantothenate synthetase family. In terms of assembly, homodimer.

It localises to the cytoplasm. The catalysed reaction is (R)-pantoate + beta-alanine + ATP = (R)-pantothenate + AMP + diphosphate + H(+). It functions in the pathway cofactor biosynthesis; (R)-pantothenate biosynthesis; (R)-pantothenate from (R)-pantoate and beta-alanine: step 1/1. In terms of biological role, catalyzes the condensation of pantoate with beta-alanine in an ATP-dependent reaction via a pantoyl-adenylate intermediate. This is Pantothenate synthetase from Nitrosomonas europaea (strain ATCC 19718 / CIP 103999 / KCTC 2705 / NBRC 14298).